The following is a 276-amino-acid chain: Cruxhalorhodopsin-3 (276 aa).

Positions 1–21 (MPAASTAATTLLQASQSEVLG) are excised as a propeptide. Residues 22–25 (EIQS) are Extracellular-facing. The helical transmembrane segment at 26 to 51 (NFLLNSSLWVNIALAGVVILLFVAMG) threads the bilayer. The Cytoplasmic portion of the chain corresponds to 52-57 (RELESS). A helical membrane pass occupies residues 58–81 (RAKLIWVATMLVPLVSISSYAGLA). Topologically, residues 82–105 (SGLTVGFLQMPPGHALAGQEVLSP) are extracellular. A helical membrane pass occupies residues 106–127 (WGRYLTWTFSTPMILLALGLLA). The Cytoplasmic segment spans residues 128 to 130 (DTD). Residues 131 to 154 (MASLFTAITMDIGMCITGLAAALV) traverse the membrane as a helical segment. The Extracellular segment spans residues 155-157 (TSS). Residues 158 to 180 (HLLRWVFYGISCAFFIAVLYVLL) traverse the membrane as a helical segment. Over 181-192 (VEWPADAEAAGT) the chain is Cytoplasmic. Residues 193–216 (SEIFGTLKLLTVVLWLGYPILWAL) traverse the membrane as a helical segment. Topologically, residues 217–225 (GSEGVALLS) are extracellular. The chain crosses the membrane as a helical span at residues 226-254 (VGVTSWGYSGLDILAKYVFAFLLLRWVAA). Position 241 is an N6-(retinylidene)lysine (K241). Over 255 to 276 (NEDTVTQAGMSLGSGGAAPADD) the chain is Cytoplasmic.

It belongs to the archaeal/bacterial/fungal opsin family.

The protein resides in the cell membrane. In terms of biological role, light-driven chloride pump. In Haloarcula vallismortis (Halobacterium vallismortis), this protein is Cruxhalorhodopsin-3 (choP3).